Reading from the N-terminus, the 193-residue chain is dCTP deaminase (193 aa).

DCTP-binding positions include 110-115 (RSSLAR), aspartate 128, 136-138 (VLE), tyrosine 171, lysine 178, and glutamine 182. Glutamate 138 (proton donor/acceptor) is an active-site residue. The segment at 169 to 193 (RPYNRRQDAKYKDQQGAVASRIDKD) is disordered.

This sequence belongs to the dCTP deaminase family. Homotrimer.

It catalyses the reaction dCTP + H2O + H(+) = dUTP + NH4(+). The protein operates within pyrimidine metabolism; dUMP biosynthesis; dUMP from dCTP (dUTP route): step 1/2. Functionally, catalyzes the deamination of dCTP to dUTP. The chain is dCTP deaminase from Pectobacterium atrosepticum (strain SCRI 1043 / ATCC BAA-672) (Erwinia carotovora subsp. atroseptica).